Consider the following 385-residue polypeptide: Deoxyguanosinetriphosphate triphosphohydrolase-like protein (385 aa).

Residues 1 to 14 (MTEGVEGRSQERSD) are compositionally biased toward basic and acidic residues. The interval 1 to 23 (MTEGVEGRSQERSDLAGFAARSA) is disordered. One can recognise an HD domain in the interval 75-204 (RLTHSLEVAQ…INYADEIAYN (130 aa)).

It belongs to the dGTPase family. Type 2 subfamily.

The protein is Deoxyguanosinetriphosphate triphosphohydrolase-like protein of Geobacter metallireducens (strain ATCC 53774 / DSM 7210 / GS-15).